The sequence spans 309 residues: MKKFIIGIAAAVLVSTAAHAETIGASMAVFDDKFGTLLRNGMEDYAKTLDGVDLQIEDALNDVAKQQSQIQNFIAAGVDAIIVQPVDTDATTVMSKLAADAGIPLVYVNREPVNIDTLPEKQAFVASNEVDSGTLQTREICKLLDGKGKAVVIMGELSNQAARMRTKDIHDVLATDQCKGIEIVQEQTANWQRTQGADLMTNWLSAGIEFDAVIANNDEMAIGAIQALKAAGRSMDSVVIGGIDATDDALAAMAAGELDVSVFQDAVGQGKGSIDAALKLSKGEAVERKIYIPFELVTKANLAEFQGKN.

The signal sequence occupies residues 1–20 (MKKFIIGIAAAVLVSTAAHA).

Belongs to the bacterial solute-binding protein 2 family.

The protein localises to the periplasm. Involved in rhizopine (L-3-O-methyl-scyllo-inosamine) catabolism. Could be involved in its high affinity transport. The chain is Putative rhizopine-binding protein (mocB) from Rhizobium meliloti (Ensifer meliloti).